A 314-amino-acid polypeptide reads, in one-letter code: Methionyl-tRNA formyltransferase (314 aa).

(6S)-5,6,7,8-tetrahydrofolate is bound at residue S109–P112.

It belongs to the Fmt family.

The enzyme catalyses L-methionyl-tRNA(fMet) + (6R)-10-formyltetrahydrofolate = N-formyl-L-methionyl-tRNA(fMet) + (6S)-5,6,7,8-tetrahydrofolate + H(+). Functionally, attaches a formyl group to the free amino group of methionyl-tRNA(fMet). The formyl group appears to play a dual role in the initiator identity of N-formylmethionyl-tRNA by promoting its recognition by IF2 and preventing the misappropriation of this tRNA by the elongation apparatus. The protein is Methionyl-tRNA formyltransferase of Alkaliphilus metalliredigens (strain QYMF).